Here is a 229-residue protein sequence, read N- to C-terminus: Ribonuclease 3 (229 aa).

Residues 5–127 enclose the RNase III domain; the sequence is LSRLERQLGY…LIGAIYLDAG (123 aa). Position 40 (glutamate 40) interacts with Mg(2+). Aspartate 44 is an active-site residue. Residues aspartate 113 and glutamate 116 each coordinate Mg(2+). Residue glutamate 116 is part of the active site. The DRBM domain maps to 154 to 224; sequence DPKTRLQEFL…AAAALIALGV (71 aa).

This sequence belongs to the ribonuclease III family. As to quaternary structure, homodimer. Requires Mg(2+) as cofactor.

The protein resides in the cytoplasm. It catalyses the reaction Endonucleolytic cleavage to 5'-phosphomonoester.. Digests double-stranded RNA. Involved in the processing of primary rRNA transcript to yield the immediate precursors to the large and small rRNAs (23S and 16S). Processes some mRNAs, and tRNAs when they are encoded in the rRNA operon. Processes pre-crRNA and tracrRNA of type II CRISPR loci if present in the organism. The protein is Ribonuclease 3 of Pseudomonas fluorescens (strain ATCC BAA-477 / NRRL B-23932 / Pf-5).